The primary structure comprises 262 residues: Protein BREAKING OF ASYMMETRY IN THE STOMATAL LINEAGE (262 aa).

2 disordered regions span residues 32–107 and 129–222; these read DEDG…QPPV and KEGK…GRGS. A compositionally biased stretch (low complexity) spans 37 to 47; sequence NNNGNTTNNNN. 2 consecutive short sequence motifs (nuclear localization signal) follow at residues 50-57 and 61-68; these read FKRIKRKI and KKKRSERK. Positions 51–66 are enriched in basic residues; the sequence is KRIKRKIKSTKKKRSE. Phosphoserine; by ASK7 is present on residues Ser-72, Ser-85, Ser-86, and Ser-87. Residues 84–95 show a composition bias toward low complexity; it reads RSSSVSPTTSGS. Ser-89 carries the phosphoserine; by ASK7 and MPK6 modification. A Phosphothreonine; by ASK7 modification is found at Thr-91. Basic and acidic residues predominate over residues 129–146; that stretch reads KEGKQEKKETESSSEKSP. A phosphoserine; by MPK6 mark is found at Ser-145 and Ser-168. A compositionally biased stretch (polar residues) spans 179–189; it reads NDNTSCQGTKD. Residues 190–200 show a composition bias toward basic and acidic residues; it reads VSSDVTERTKE. The segment at 222-262 is required for polarization at the cell cortex; it reads SFAFPILGVEWMGSPAKMPESDDLSPKKQKPVALGFQCCRF. The FxFP, required for cortical polarity formation motif lies at 223-226; sequence FAFP. Phosphoserine; by MPK6 occurs at positions 235 and 246.

As to quaternary structure, component of a complex made of POLAR, BASL, ASK7/BIN2 and ASK3/SK12. Interacts with POLAR, ASK7/BIN2 and ASK3/SK12. Binds to YDA when phosphorylated. Interacts with MPK6, MPK3 and MKK5. Cortical localization of BASL requires phosphorylation mediated by MPK3 and MPK6. Phosphorylation promotes YDA binding. Phosphorylation status modulates subcellular mobility. Mostly expressed in stomatal lineage cells including asymmetrically dividing meristemoid mother cells (MMCs) and meristemoids, and, at lower levels, in their sisters. Also present in vasculature. Expressed at low levels in the epidermal pavement cells.

It localises to the cytoplasm. The protein localises to the nucleus. It is found in the cell cortex. The protein resides in the cell membrane. Its function is as follows. Regulates asymmetric cell division (ACD), especially in stomatal-lineage cells, probably by modulating accumulation and subcellular polarization of POLAR and SPCH. Mediates an attenuation of MAPK signaling upon polarization of POLAR and ASK7/BIN2 in stomatal lineage ground cells (SLGCs) undergoing ACD, and relieves BIN2 inhibition of SPCH in the nucleus. When phosphorylated, functions as a scaffold and recruits the MAPKKK YODA, MPK3 and MPK6 to spatially reorganize the MAPK signaling pathway at the cortex of cells undergoing ACD. Cortical polarization leads to elevated nuclear MPK6 signaling and lowered SPCH abundance in one of the two daughter cells, thus differentiating the two daughter cells after ACD. The sequence is that of Protein BREAKING OF ASYMMETRY IN THE STOMATAL LINEAGE from Arabidopsis thaliana (Mouse-ear cress).